A 445-amino-acid chain; its full sequence is Phosphoglucosamine mutase (445 aa).

Serine 99 serves as the catalytic Phosphoserine intermediate. Serine 99, aspartate 242, aspartate 244, and aspartate 246 together coordinate Mg(2+). Position 99 is a phosphoserine (serine 99).

It belongs to the phosphohexose mutase family. Mg(2+) is required as a cofactor. Activated by phosphorylation.

The enzyme catalyses alpha-D-glucosamine 1-phosphate = D-glucosamine 6-phosphate. Catalyzes the conversion of glucosamine-6-phosphate to glucosamine-1-phosphate. This Helicobacter pylori (strain G27) protein is Phosphoglucosamine mutase.